Here is a 531-residue protein sequence, read N- to C-terminus: Protein arginine N-methyltransferase 3 (531 aa).

Positions 1–43 (MCSLASGATGGRGAVENEEDLPELSDSGDEAAWEDEDDADLPH) are disordered. Cys2 is subject to N-acetylcysteine. Positions 16-39 (ENEEDLPELSDSGDEAAWEDEDDA) are enriched in acidic residues. Ser25 and Ser27 each carry phosphoserine. A C2H2-type zinc finger spans residues 48–71 (TPCLFCNRLFTSAEETFSHCKSEH). The segment at 48 to 71 (TPCLFCNRLFTSAEETFSHCKSEH) is interaction with ZNF200. Residue Ser171 is modified to Phosphoserine. The mediates interaction with ALDH1A1 stretch occupies residues 186-531 (MKQFAQDFVM…NNSTQTYGLQ (346 aa)). Positions 217-531 (DGVYFSSYGH…NNSTQTYGLQ (315 aa)) constitute an SAM-dependent MTase PRMT-type domain. Arg239, Gly263, Asp285, Ile313, and Glu314 together coordinate S-adenosyl-L-homocysteine. Residues Glu329 and Glu338 contribute to the active site. Residue Ser343 participates in S-adenosyl-L-homocysteine binding.

This sequence belongs to the class I-like SAM-binding methyltransferase superfamily. Protein arginine N-methyltransferase family. As to quaternary structure, monomer and homodimer. Interacts with EPB41L3 (via FERM domain); the interaction is direct and inhibits the protein-arginine N-methyltransferase activity of PRMT3. Interacts with the 40S ribosomal protein RPS2. Interacts with ALDH1A1; the interaction is direct, inhibits ALDH1A1 aldehyde dehydrogenase activity and is independent of the methyltransferase activity of PRMT3. Interacts (via zinc-finger) with ZNF200 (via C-terminus); the interaction is direct and required to localize PRMT3 to the nucleus and inhibit its proteasomal degradation.

Its subcellular location is the cytoplasm. It is found in the cytosol. The protein localises to the nucleus. It carries out the reaction L-arginyl-[protein] + S-adenosyl-L-methionine = N(omega)-methyl-L-arginyl-[protein] + S-adenosyl-L-homocysteine + H(+). It catalyses the reaction L-arginyl-[protein] + 2 S-adenosyl-L-methionine = N(omega),N(omega)-dimethyl-L-arginyl-[protein] + 2 S-adenosyl-L-homocysteine + 2 H(+). With respect to regulation, inhibited by N-ethylmaleimide and high concentrations of zinc chloride. Allosterically inhibited by SGC707. Allosterically inhibited by (1-(benzo[d][1,2,3]thiadiazol- 6-yl)-3-(2-cyclohexenylethyl)urea) and derivatives thereof. Functionally, protein-arginine N-methyltransferase that catalyzes both the monomethylation and asymmetric dimethylation of the guanidino nitrogens of arginine residues in target proteins, and therefore falls into the group of type I methyltransferases. Catalyzes the asymmetric arginine dimethylation at multiple sites in the Arg/Gly-rich region of small ribosomal subunit protein uS5/RPS2. Also appears to methylate other ribosomal proteins. May regulate retinoic acid synthesis and signaling by inhibiting ALDH1A1 retinal dehydrogenase activity. Contributes to methylation of histone H4 'Arg-3', a specific tag for epigenetic transcriptional activation. Mediates asymmetric arginine dimethylation of histone H4 'Arg-3' (H4R3me2a) in the promoter region of miRNA miR-3648, to promote its transcription and osteogenesis. This is Protein arginine N-methyltransferase 3 from Homo sapiens (Human).